The chain runs to 218 residues: Octanoyltransferase (218 aa).

In terms of domain architecture, BPL/LPL catalytic spans 31 to 206; sequence EETPDEVWLV…ELVNLLGYEQ (176 aa). Substrate contacts are provided by residues 70–77, 137–139, and 150–152; these read RGGQVTYH, SLG, and GLA. C168 serves as the catalytic Acyl-thioester intermediate.

Belongs to the LipB family.

The protein localises to the cytoplasm. The enzyme catalyses octanoyl-[ACP] + L-lysyl-[protein] = N(6)-octanoyl-L-lysyl-[protein] + holo-[ACP] + H(+). The protein operates within protein modification; protein lipoylation via endogenous pathway; protein N(6)-(lipoyl)lysine from octanoyl-[acyl-carrier-protein]: step 1/2. Its function is as follows. Catalyzes the transfer of endogenously produced octanoic acid from octanoyl-acyl-carrier-protein onto the lipoyl domains of lipoate-dependent enzymes. Lipoyl-ACP can also act as a substrate although octanoyl-ACP is likely to be the physiological substrate. In Vibrio vulnificus (strain YJ016), this protein is Octanoyltransferase.